Reading from the N-terminus, the 85-residue chain is Transcription factor 4 (85 aa).

Residues 7 to 60 (ERRMANNARERLRVRDINEAFKELGRMVQLHLKSDKPQTKLLILHQAVAVILSL) form the bHLH domain. Positions 62-85 (QQVRERNLNPKAACLKRREEEKVS) are class A specific domain.

As to quaternary structure, efficient DNA binding requires dimerization with another bHLH protein. Forms homo- or heterooligomers with myogenin.

It is found in the nucleus. Functionally, transcription factor that binds to the immunoglobulin enhancer Mu-E5/KE5-motif. Involved in the initiation of neuronal differentiation. Binds to the E-box present in the somatostatin receptor 2 initiator element (SSTR2-INR) to activate transcription. The polypeptide is Transcription factor 4 (TCF4) (Gallus gallus (Chicken)).